A 90-amino-acid chain; its full sequence is uncharacterized protein (90 aa).

A signal peptide spans 1–21 (MFKFSIPLLLFIFLFFSCINS). Positions 56–90 (SNEKLPERILSGSSGSCSSCSISSSNGSSSRSSKQ) are disordered. Positions 66 to 90 (SGSSGSCSSCSISSSNGSSSRSSKQ) are enriched in low complexity. Residue Asn81 is glycosylated (N-linked (GlcNAc...) asparagine).

This is an uncharacterized protein from Dictyostelium discoideum (Social amoeba).